Consider the following 305-residue polypeptide: Methionyl-tRNA formyltransferase (305 aa).

109 to 112 (SLLP) contributes to the (6S)-5,6,7,8-tetrahydrofolate binding site.

It belongs to the Fmt family.

It carries out the reaction L-methionyl-tRNA(fMet) + (6R)-10-formyltetrahydrofolate = N-formyl-L-methionyl-tRNA(fMet) + (6S)-5,6,7,8-tetrahydrofolate + H(+). In terms of biological role, attaches a formyl group to the free amino group of methionyl-tRNA(fMet). The formyl group appears to play a dual role in the initiator identity of N-formylmethionyl-tRNA by promoting its recognition by IF2 and preventing the misappropriation of this tRNA by the elongation apparatus. The chain is Methionyl-tRNA formyltransferase from Roseobacter denitrificans (strain ATCC 33942 / OCh 114) (Erythrobacter sp. (strain OCh 114)).